Consider the following 357-residue polypeptide: Transcription factor PCF6 (357 aa).

A disordered region spans residues 1 to 29 (MEAAVGDGEGGGGGGGRGKRGRGGGGGEM). Residues 7 to 16 (DGEGGGGGGG) are compositionally biased toward gly residues. The 59-residue stretch at 52–110 (GKDRHSKVYTAKGIRDRRVRLSVATAIQFYDLQDRLGFDQPSKAIEWLINAASPAIDTL) folds into the TCP domain. Disordered regions lie at residues 125-162 (AADA…DKEV) and 281-307 (ANRG…QQLQ). Polar residues-rich tracts occupy residues 142-155 (LSNK…SETS) and 284-295 (GTLQSNSPSNMS).

As to quaternary structure, forms homodimers and heterodimers.

It is found in the nucleus. Transcription activator. Binds the promoter core sequence 5'-GGNCC-3'. The polypeptide is Transcription factor PCF6 (PCF6) (Oryza sativa subsp. japonica (Rice)).